We begin with the raw amino-acid sequence, 917 residues long: MLX-interacting protein (917 aa).

The interval 1-72 (MAADVFMCSP…AGPGREEPPR (72 aa)) is disordered. At A2 the chain carries N-acetylalanine. Residues S9, S33, and S39 each carry the phosphoserine modification. Acidic residues predominate over residues 27–37 (PEDDDDSDTDE). A compositionally biased stretch (low complexity) spans 47–57 (ATSARAHASAA). Residues 73 to 327 (RQQIIHSGHF…PLQPNLDFMD (255 aa)) form a required for cytoplasmic localization region. A transactivation domain region spans residues 322-445 (NLDFMDTFEP…LLSPGPAPAP (124 aa)). Disordered stretches follow at residues 347–402 (LPPP…CERT) and 632–711 (SHST…TDPK). The segment covering 378 to 388 (LPNSLITSSAA) has biased composition (polar residues). Residues 632–643 (SHSTSSQPSPVS) are compositionally biased toward low complexity. S667 carries the post-translational modification Phosphoserine. The segment covering 670–685 (VPATGSSRDCPNSGQA) has biased composition (polar residues). Over residues 686–704 (SPCPSEQSPSPQSPQNNCS) the composition is skewed to low complexity. One can recognise a bHLH domain in the interval 717 to 767 (KNRQKHISAEQKRRFNIRMGFNTLNSLISNNSKQTSHAITLQKTMEYITKL). The interval 767-788 (LQQERMQMQEEARRLREEIEEL) is leucine-zipper. The interval 830–879 (WKFWIFSMIIKPLFESFKGMVSTSSLEEFHRTALSWLDQHCSLPVLRPMV) is mediates heterotypic interactions between MLXIP and MLX and is required for cytoplasmic localization. The segment at 897 to 917 (SQLPEQASEAVTRMGKRSGES) is disordered.

Efficient DNA binding requires dimerization with another bHLH protein. Binds DNA as a homodimer or a heterodimer with MLX/TCFL4.

The protein resides in the cytoplasm. Its subcellular location is the nucleus. It is found in the mitochondrion outer membrane. Its function is as follows. Binds DNA as a heterodimer with MLX/TCFL4 and activates transcription. Binds to the canonical E box sequence 5'-CACGTG-3'. Plays a role in transcriptional activation of glycolytic target genes. Involved in glucose-responsive gene regulation. Regulates transcription in response to changes in cellular carbohydrate abundance such as occurs during fasting to feeding metabolic transition. Refeeding stimulates MLXIPL/ChREBP transcription factor, leading to increased BCKDK to PPM1K expression ratio, phosphorylation and activation of ACLY that ultimately results in the generation of malonyl-CoA and oxaloacetate immediate substrates of de novo lipogenesis and gluconeogenesis, respectively. This Mus musculus (Mouse) protein is MLX-interacting protein.